Here is a 407-residue protein sequence, read N- to C-terminus: Cell division protein FtsZ (407 aa).

GTP-binding positions include 18 to 22 (GGGVN), 105 to 107 (GTG), E136, R140, and D184. The segment at 312–407 (FDGGQPPARR…EELDVPDFLK (96 aa)) is disordered. Composition is skewed to low complexity over residues 336–348 (AAPARSSAESTRP) and 368–377 (APATASGESS). The span at 381–390 (VSPPHVPPAR) shows a compositional bias: pro residues. Acidic residues predominate over residues 396–407 (QAEELDVPDFLK).

It belongs to the FtsZ family. In terms of assembly, homodimer. Polymerizes to form a dynamic ring structure in a strictly GTP-dependent manner. Interacts directly with several other division proteins.

It is found in the cytoplasm. Its function is as follows. Essential cell division protein that forms a contractile ring structure (Z ring) at the future cell division site. The regulation of the ring assembly controls the timing and the location of cell division. One of the functions of the FtsZ ring is to recruit other cell division proteins to the septum to produce a new cell wall between the dividing cells. Binds GTP and shows GTPase activity. The polypeptide is Cell division protein FtsZ (Streptomyces griseus).